A 1191-amino-acid chain; its full sequence is Solute carrier family 12 member 2 (1191 aa).

Residues 1-166 (MEPAFPASSA…MSEGSLHSSG (166 aa)) form a disordered region. Residues 1–258 (MEPAFPASSA…ADNKGVVKFG (258 aa)) are Cytoplasmic-facing. 4 stretches are compositionally biased toward low complexity: residues 13–25 (QSQS…AGQQ), 59–69 (KGQTAAQPAAA), 80–99 (AAAP…AAAA), and 131–141 (SASSAHGGHQP). Over residues 142 to 155 (PSESMNGYPQNGDT) the composition is skewed to polar residues. A phosphothreonine; by OXSR1 and STK39 mark is found at Thr-175, Thr-179, and Thr-184. Phosphothreonine is present on residues Thr-189 and Thr-202. Residues 259-288 (WIKGVLVRCMLNIWGVMLFIRLSWIVGHAG) traverse the membrane as a discontinuously helical segment. Leu-269 is a Na(+) binding site. 2 residues coordinate K(+): Asn-270 and Ile-271. Na(+) is bound at residue Trp-272. The chloride site is built by Gly-273, Val-274, and Met-275. The chain crosses the membrane as a helical span at residues 289–308 (IGLALLVIGTATVVTTITGL). Residues 309-339 (STSAITTNGFVRGGGAYYLISRSLGPEFGGA) are Cytoplasmic-facing. Residues 340–367 (IGLIFAFANAVAVAMYVVGFAETVRDLL) form a helical membrane-spanning segment. Phe-344 serves as a coordination point for chloride. Tyr-355 contacts K(+). The Extracellular segment spans residues 368-377 (VEHNALMIDE). Residues 378-401 (MSDIRIIGSVTIVVLFGISVAGME) form a helical membrane-spanning segment. At 402 to 404 (WEA) the chain is on the cytoplasmic side. Residues 405 to 426 (KAQIVLLGILLLAIVNFTVGTF) traverse the membrane as a helical segment. Residues 427 to 458 (IPANDKRAKGFFNYRGEIFSENFVPDFRDGED) lie on the Extracellular side of the membrane. The discontinuously helical transmembrane segment at 459 to 476 (FFSVFAIFFPAATGILAG) threads the bilayer. Pro-468, Ala-469, and Thr-471 together coordinate K(+). Positions 468 and 469 each coordinate chloride. 2 residues coordinate chloride: Gly-472 and Ile-473. Residues 477–491 (ANISGDLADPQLAIP) are Cytoplasmic-facing. The helical transmembrane segment at 492–513 (KGTLLAILITTIVYAGAAVSVG) threads the bilayer. Topologically, residues 514–571 (SCIVREATGNLTDAIIPGTVTNCTNVACKLGFNFSSCATNKCSYGLMNDFQVMSLVSG) are extracellular. N-linked (GlcNAc...) asparagine glycosylation is found at Asn-523 and Asn-535. Cys-536 and Cys-541 are disulfide-bonded. Asn-546 is a glycosylation site (N-linked (GlcNAc...) asparagine). Cys-550 and Cys-555 are disulfide-bonded. The helical transmembrane segment at 572–596 (FGPLITAGIFSATLSSALASLVSAP) threads the bilayer. The Na(+) site is built by Ala-583, Ser-586, and Ser-587. At 597–624 (KIFQALCKDNIYPGLHVFSVGYGKNNEP) the chain is on the cytoplasmic side. Helical transmembrane passes span 625–645 (LRGY…AELN) and 646–664 (VIAP…LINF). Chloride-binding residues include Phe-655 and Tyr-659. Residues 665-687 (SVFHASLAKSPGWRPAFRFYNMW) lie on the Cytoplasmic side of the membrane. 2 consecutive transmembrane segments (helical) span residues 688–705 (ISLI…VINW) and 706–718 (WAAL…VLAL). Over 719–1191 (YIYVTYKKPD…NHQSVLTFYS (473 aa)) the chain is Cytoplasmic. The tract at residues 734–751 (STQALTYLNALQHAIRLT) is scissor helix. Positions 929–972 (HSDADSSKPSSKSVSETNSPAVCQDQKDEEDDGKASTQPLLKKE) are disordered. Residues 935–948 (SKPSSKSVSETNSP) are compositionally biased toward low complexity. Residue Thr-1114 is modified to Phosphothreonine.

The protein belongs to the SLC12A transporter family. In terms of assembly, homodimer. In terms of processing, phosphorylated at Thr-175, Thr-179 and Thr-184 by OXSR1/OSR1 and STK39/SPAK downstream of WNK kinases (WNK1, WNK2, WNK3 or WNK4), promoting its activity. Strongly expressed in rectal gland, brain, gill and intestine. Also detected at lower levels in heart, kidney, and testis.

The protein resides in the basolateral cell membrane. The enzyme catalyses K(+)(out) + 2 chloride(out) + Na(+)(out) = K(+)(in) + 2 chloride(in) + Na(+)(in). Its activity is regulated as follows. Activated following phosphorylation by OXSR1/OSR1 and STK39/SPAK. Inhibited by bumetanide. In terms of biological role, cation-chloride cotransporter which mediates the electroneutral transport of chloride, potassium and/or sodium ions across the membrane. Plays a vital role in the regulation of ionic balance and cell volume. In Squalus acanthias (Spiny dogfish), this protein is Solute carrier family 12 member 2 (SLC12A2).